The following is a 357-amino-acid chain: MGSRELNLRERQVLGIIIQLYVVTAAPVGSRYIARNYSLGLSDATIRNVMADLEAEGYISQPHTSAGRIPTDLGYRYYVDLIMKVQRIDEEEKRRMESDFGPISMEGRGTSAEVLVSAAKVLGSISRQLSVVLSPTLSNAVFEKLDMVLLSSTRMMVVLSIQSMFVKTIVMELQHELTRQKVDEVVDLLNERLSGLTLSEIRRSITRRLAGSSCDTNLKDLIVRSADSLFDESPIFERLYISGAEYIVEQPEFKQPERVRELITMIEDKFSVARLVEDIAPKQDLKRTAGHDVSISIGRENSALQAEDLTIVSAPYYAGSMVGTLGILGPKRMDYEHAVRVLNYMADCLTATLSDVN.

It belongs to the HrcA family.

In terms of biological role, negative regulator of class I heat shock genes (grpE-dnaK-dnaJ and groELS operons). Prevents heat-shock induction of these operons. The chain is Heat-inducible transcription repressor HrcA from Chlorobium luteolum (strain DSM 273 / BCRC 81028 / 2530) (Pelodictyon luteolum).